Reading from the N-terminus, the 980-residue chain is Envelope glycoprotein B (980 aa).

Over residues 1–14 the composition is skewed to polar residues; sequence MSSGCRSVGGSTWG. 2 disordered regions span residues 1–20 and 88–118; these read MSSG…RGDG and TTPS…TETP. The signal sequence occupies residues 1 to 86; that stretch reads MSSGCRSVGG…LFGSCVVRAV (86 aa). Topologically, residues 87–849 are virion surface; that stretch reads PTTPSPPTST…SGIASFLNNP (763 aa). Residues 96-118 show a composition bias toward low complexity; sequence TPTSMSTHSHGTVDPTLLPTETP. Cystine bridges form between C140/C647, C157/C603, C231/C296, C389/C437, and C668/C708. An N-linked (GlcNAc...) asparagine; by host glycan is attached at N165. Positions 197–203 are involved in fusion and/or binding to host membrane; that stretch reads VWKGYSH. A glycan (N-linked (GlcNAc...) asparagine; by host) is linked at N275. Residues 282-290 are involved in fusion and/or binding to host membrane; that stretch reads GWMPWRHYT. N380, N423, N497, N514, N515, and N560 each carry an N-linked (GlcNAc...) asparagine; by host glycan. Low complexity predominate over residues 505-516; sequence LLNPNANNNNNT. Residues 505–535 are disordered; it reads LLNPNANNNNNTTRRRRSLLSVPEPQPTQDG. N-linked (GlcNAc...) asparagine; by host glycosylation is found at N727 and N749. Hydrophobic membrane proximal region stretches follow at residues 794–847 and 823–843; these read IDSV…SFLN and AVGT…SGIA. A helical transmembrane segment spans residues 850–870; that stretch reads FGGLAIGLLVIAGLVAAFFAY. The Intravirion portion of the chain corresponds to 871-980; the sequence is RYVMQIRSNP…NDTMENEKMV (110 aa). The Golgi targeting signature appears at 925 to 928; it reads YMSM. N952 carries an N-linked (GlcNAc...) asparagine; by host glycan. Residues 965-968 carry the Internalization motif motif; the sequence is YTRL. Residue N971 is glycosylated (N-linked (GlcNAc...) asparagine; by host).

It belongs to the herpesviridae glycoprotein B family. In terms of assembly, homotrimer; disulfide-linked. Binds to heparan sulfate proteoglycans. Interacts with gH/gL heterodimer. In terms of processing, a proteolytic cleavage by host furin generates two subunits that remain linked by disulfide bonds.

The protein resides in the virion membrane. It is found in the host cell membrane. Its subcellular location is the host endosome membrane. The protein localises to the host Golgi apparatus membrane. Envelope glycoprotein that forms spikes at the surface of virion envelope. Essential for the initial attachment to heparan sulfate moieties of the host cell surface proteoglycans. Involved in fusion of viral and cellular membranes leading to virus entry into the host cell. Following initial binding to its host receptors, membrane fusion is mediated by the fusion machinery composed at least of gB and the heterodimer gH/gL. May be involved in the fusion between the virion envelope and the outer nuclear membrane during virion egress. This is Envelope glycoprotein B from Equine herpesvirus 1 (strain HVS25A) (EHV-1).